The following is a 136-amino-acid chain: MAKEFSRSQRVSQEMQKEIALILQREIKDPRVGMATVSGIELSRDLAYAKVFVTFLNVLTDNADPDTVKNGIKALQDASGYIRTLLGKAMRLRIVPELTFAYDNSLIEGMRMSNLVSNVIKNDVERQVNPGSDEEK.

This sequence belongs to the RbfA family. In terms of assembly, monomer. Binds 30S ribosomal subunits, but not 50S ribosomal subunits or 70S ribosomes.

The protein localises to the cytoplasm. One of several proteins that assist in the late maturation steps of the functional core of the 30S ribosomal subunit. Associates with free 30S ribosomal subunits (but not with 30S subunits that are part of 70S ribosomes or polysomes). Required for efficient processing of 16S rRNA. May interact with the 5'-terminal helix region of 16S rRNA. The polypeptide is Ribosome-binding factor A (Yersinia pestis bv. Antiqua (strain Antiqua)).